Reading from the N-terminus, the 420-residue chain is Replication factor C large subunit (420 aa).

Gly-46–Thr-53 provides a ligand contact to ATP.

The protein belongs to the activator 1 small subunits family. RfcL subfamily. Heteromultimer composed of small subunits (RfcS) and large subunits (RfcL).

In terms of biological role, part of the RFC clamp loader complex which loads the PCNA sliding clamp onto DNA. This is Replication factor C large subunit from Thermoplasma volcanium (strain ATCC 51530 / DSM 4299 / JCM 9571 / NBRC 15438 / GSS1).